Consider the following 998-residue polypeptide: SEC23-interacting protein (998 aa).

The interaction with SEC23A stretch occupies residues 1-363 (MADRKANGGG…YTEEFSEKLE (363 aa)). The segment at 50 to 246 (LPGEDSTDVG…AQQQVPARPA (197 aa)) is disordered. Positions 54-63 (DSTDVGEEDS) are enriched in acidic residues. The span at 65–78 (LGQTSTHTSTPQTF) shows a compositional bias: polar residues. Residues 79 to 88 (SYFSQVSSSS) are compositionally biased toward low complexity. Polar residues-rich tracts occupy residues 94 to 108 (IGQSPLTTSAMSAGQ), 143 to 158 (PPSQMGTSTYSPSQPS), and 232 to 241 (AMQSPAQQQV). The residue at position 600 (Ser600) is a Phosphoserine. The 64-residue stretch at 640 to 703 (EEPLTLHGTL…NFVKLKAAKL (64 aa)) folds into the SAM domain. The segment at 720 to 742 (TKGQDESAPKTKEMASPSSESNE) is disordered. Positions 722-732 (GQDESAPKTKE) are enriched in basic and acidic residues. 3 positions are modified to phosphoserine: Ser735, Ser748, and Ser924. A DDHD domain is found at 777–987 (LDFEPEIFFA…ALLLLKEIYR (211 aa)).

The protein belongs to the PA-PLA1 family. In terms of assembly, interacts with SEC23A.

The protein localises to the cytoplasmic vesicle. It is found in the COPII-coated vesicle membrane. It localises to the endoplasmic reticulum. Its function is as follows. Plays a role in the organization of endoplasmic reticulum exit sites. Specifically binds to phosphatidylinositol 3-phosphate (PI(3)P), phosphatidylinositol 4-phosphate (PI(4)P) and phosphatidylinositol 5-phosphate (PI(5)P). The chain is SEC23-interacting protein (Sec23ip) from Mus musculus (Mouse).